A 509-amino-acid polypeptide reads, in one-letter code: Tyrosine-protein phosphatase non-receptor type substrate 1 (509 aa).

Residues 1 to 31 form the signal peptide; sequence MEPAGPAPGRLGPLLFCLLLSASCFCAGASG. The region spanning 32–138 is the Ig-like V-type domain; sequence KELKVTQADK…IVEPDTEIKS (107 aa). The Extracellular portion of the chain corresponds to 32-373; sequence KELKVTQADK…PDNNAYYNWN (342 aa). N54, N93, N169, N181, N205, N209, N242, N246, N271, N293, N312, N320, and N345 each carry an N-linked (GlcNAc...) asparagine glycan. An intrachain disulfide couples C55 to C122. 2 Ig-like C1-type domains span residues 150–248 and 255–349; these read PSSP…ANFS and PTLK…HTVR. The cysteines at positions 172 and 229 are disulfide-linked. An intrachain disulfide couples C274 to C332. A helical membrane pass occupies residues 374-394; it reads VFIGVGVACALLVVLLMAALY. The Cytoplasmic portion of the chain corresponds to 395–509; the sequence is LLRIKQKKAK…EYASVQVQRK (115 aa). At Y436 the chain carries Phosphotyrosine; by Tyr-kinases. Residues 436-439 carry the SH2-binding motif; it reads YADL. The tract at residues 441–472 is disordered; that stretch reads LPKEKKPAPRVPEPNNHTEYASIETGKLPRPE. An SH3-binding motif is present at residues 446-451; that stretch reads KPAPRV. A phosphotyrosine; by Tyr-kinases mark is found at Y460, Y477, and Y501. 3 short sequence motifs (SH2-binding) span residues 460–463, 477–480, and 501–504; these read YASI, YADL, and YASV. Positions 485–509 are disordered; that stretch reads LNRAQPTPKPEPSFSEYASVQVQRK. Positions 500–509 are enriched in polar residues; the sequence is EYASVQVQRK.

Binds PTPN11 when tyrosine-phosphorylated, except in macrophages, where it primarily binds PTPN6. Binds GRB2 in vitro. Binds FGR. Binds JAK2 irrespective of its phosphorylation status and forms a stable complex. Binds SCAP1 and/or SCAP2. The resulting complex recruits FYB1. Binds PTK2B. Interacts with TRIM2. Post-translationally, N-glycosylated. In terms of processing, phosphorylated on tyrosine residues in response to insulin, cell adhesion or epidermal growth factors. Dephosphorylated by PTPN11. Highly expressed in brain, spleen, lung, liver and kidney. Detected at lower levels in heart. Highly expressed in alveolar and peritoneal macrophages, and at lower levels in dendritic cells.

It is found in the membrane. Immunoglobulin-like cell surface receptor for CD47. Acts as docking protein and induces translocation of PTPN6, PTPN11 and other binding partners from the cytosol to the plasma membrane. Supports adhesion of cerebellar neurons, neurite outgrowth and glial cell attachment. May play a key role in intracellular signaling during synaptogenesis and in synaptic function. Involved in the negative regulation of receptor tyrosine kinase-coupled cellular responses induced by cell adhesion, growth factors or insulin. Mediates negative regulation of phagocytosis, mast cell activation and dendritic cell activation. CD47 binding prevents maturation of immature dendritic cells and inhibits cytokine production by mature dendritic cells. Plays a role in antiviral immunity and limits new world arenavirus infection by decreasing virus internalization. Receptor for THBS1. Interaction with THBS1 stimulates phosphorylation of SIRPA. In response to THBS1, involved in ROS signaling in non-phagocytic cells, stimulating NADPH oxidase-derived ROS production. The protein is Tyrosine-protein phosphatase non-receptor type substrate 1 (Sirpa) of Rattus norvegicus (Rat).